Here is a 107-residue protein sequence, read N- to C-terminus: Probable insulin-like peptide beta-type 3 (107 aa).

Positions 1–19 are cleaved as a signal peptide; the sequence is MKLSVVLALFIIFQLGAAS. A propeptide spanning residues 20–55 is cleaved from the precursor; that stretch reads LMRNWMFDFEKELEHDYDDSEIGFHNIHSLMARSRR. Cystine bridges form between Cys-62–Cys-90, Cys-74–Cys-103, Cys-78–Cys-104, and Cys-89–Cys-94.

This sequence belongs to the insulin family.

It is found in the secreted. The protein is Probable insulin-like peptide beta-type 3 (ins-3) of Caenorhabditis elegans.